Reading from the N-terminus, the 161-residue chain is NAD(P)H-quinone oxidoreductase subunit I, chloroplastic (161 aa).

2 consecutive 4Fe-4S ferredoxin-type domains span residues 55-84 (GRIH…VDWK) and 95-124 (LNYS…MTEE). Residues Cys64, Cys67, Cys70, Cys74, Cys104, Cys107, Cys110, and Cys114 each coordinate [4Fe-4S] cluster.

The protein belongs to the complex I 23 kDa subunit family. In terms of assembly, NDH is composed of at least 16 different subunits, 5 of which are encoded in the nucleus. [4Fe-4S] cluster serves as cofactor.

The protein localises to the plastid. It localises to the chloroplast thylakoid membrane. The enzyme catalyses a plastoquinone + NADH + (n+1) H(+)(in) = a plastoquinol + NAD(+) + n H(+)(out). It carries out the reaction a plastoquinone + NADPH + (n+1) H(+)(in) = a plastoquinol + NADP(+) + n H(+)(out). Functionally, NDH shuttles electrons from NAD(P)H:plastoquinone, via FMN and iron-sulfur (Fe-S) centers, to quinones in the photosynthetic chain and possibly in a chloroplast respiratory chain. The immediate electron acceptor for the enzyme in this species is believed to be plastoquinone. Couples the redox reaction to proton translocation, and thus conserves the redox energy in a proton gradient. The polypeptide is NAD(P)H-quinone oxidoreductase subunit I, chloroplastic (Lotus japonicus (Lotus corniculatus var. japonicus)).